Consider the following 613-residue polypeptide: Forkhead box protein O (613 aa).

Disordered regions lie at residues 39–90 (RARS…KNSS), 182–205 (KSVR…RAKK), 217–269 (GLND…RLSP), and 317–360 (QGFS…PASG). Thr44 carries the phosphothreonine; by PKB/AKT1 modification. Positions 63–80 (TKASNQQLAPGDSQQAIQ) are enriched in polar residues. Ser75 carries the phosphoserine modification. A compositionally biased stretch (low complexity) spans 81–90 (NANAAKKNSS). A DNA-binding region (fork-head) is located at residues 95–201 (WGNLSYADLI…ETSRYEKRRG (107 aa)). Ser190 bears the Phosphoserine; by PKB/AKT1 mark. 2 stretches are compositionally biased toward polar residues: residues 221 to 230 (ATPSPSSSVS) and 256 to 265 (RASSNASSCG). Residue Ser259 is modified to Phosphoserine; by PKB/AKT1. 3 positions are modified to phosphoserine: Ser262, Ser263, and Ser268. Over residues 327 to 336 (SQPPPPPYQP) the composition is skewed to pro residues. The span at 337–353 (PQHQQAQQQQQQQSPYA) shows a compositional bias: low complexity.

As to quaternary structure, interacts with melt.

It is found in the cytoplasm. The protein localises to the nucleus. Functionally, transcription factor involved in the regulation of the insulin signaling pathway. Consistently activates both the downstream target Thor\d4EBP and the feedback control target InR. Involved in negative regulation of the cell cycle, modulating cell growth and proliferation. In response to cellular stresses, such as nutrient deprivation or increased levels of reactive oxygen species, foxo is activated and inhibits growth through the action of target genes such as Thor. Foxo activated in the adult fat body can regulate lifespan in adults; an insulin peptide itself may function as one secondary messenger of insulin-regulated aging. Also regulates Lip4, homolog of human acid lipases, thereby acting as a key modulator of lipid metabolism by insulin signaling and integrates insulin responses to glucose and lipid homeostasis. In Drosophila melanogaster (Fruit fly), this protein is Forkhead box protein O.